The chain runs to 941 residues: Endoplasmic reticulum aminopeptidase 1 (941 aa).

A topological domain (cytoplasmic) is located at residue methionine 1. The helical; Signal-anchor for type II membrane protein transmembrane segment at 2 to 21 (VFLPLKWSLATMSFLLSSLL) threads the bilayer. Topologically, residues 22-941 (ALLTVSTPSW…WLQSEKLERM (920 aa)) are lumenal. N-linked (GlcNAc...) asparagine glycosylation is found at asparagine 70 and asparagine 154. Substrate is bound by residues glutamate 183 and 317–321 (GAMEN). Histidine 353 lines the Zn(2+) pocket. Glutamate 354 functions as the Proton acceptor in the catalytic mechanism. Residues histidine 357 and glutamate 376 each coordinate Zn(2+). Disulfide bonds link cysteine 404–cysteine 443 and cysteine 736–cysteine 743. Asparagine 414 is a glycosylation site (N-linked (GlcNAc...) asparagine). N-linked (GlcNAc...) asparagine glycosylation is found at asparagine 760 and asparagine 901.

This sequence belongs to the peptidase M1 family. In terms of assembly, monomer. May also exist as a heterodimer; with ERAP2. Interacts with RBMX. It depends on Zn(2+) as a cofactor. In terms of processing, N-glycosylated. In terms of tissue distribution, ubiquitous.

Its subcellular location is the endoplasmic reticulum membrane. Aminopeptidase that plays a central role in peptide trimming, a step required for the generation of most HLA class I-binding peptides. Peptide trimming is essential to customize longer precursor peptides to fit them to the correct length required for presentation on MHC class I molecules. Strongly prefers substrates 9-16 residues long. Rapidly degrades 13-mer to a 9-mer and then stops. Preferentially hydrolyzes the residue Leu and peptides with a hydrophobic C-terminus, while it has weak activity toward peptides with charged C-terminus. May play a role in the inactivation of peptide hormones. May be involved in the regulation of blood pressure through the inactivation of angiotensin II and/or the generation of bradykinin in the kidney. This chain is Endoplasmic reticulum aminopeptidase 1 (ERAP1), found in Homo sapiens (Human).